Reading from the N-terminus, the 359-residue chain is F-box protein At1g10895 (359 aa).

Positions 2–48 constitute an F-box domain; that stretch reads TTMSDLDEIMVAEILCRTPMTCLKTVRSVCKKWNALSKKWFFFGKAK.

This Arabidopsis thaliana (Mouse-ear cress) protein is F-box protein At1g10895.